A 247-amino-acid polypeptide reads, in one-letter code: V-type proton ATPase subunit D (247 aa).

This sequence belongs to the V-ATPase D subunit family. As to quaternary structure, V-ATPase is a heteromultimeric enzyme made up of two complexes: the ATP-hydrolytic V1 complex and the proton translocation V0 complex. The V1 complex consists of three catalytic AB heterodimers that form a heterohexamer, three peripheral stalks each consisting of EG heterodimers, one central rotor including subunits D and F, and the regulatory subunits C and H. The proton translocation complex V0 consists of the proton transport subunit a, a ring of proteolipid subunits c9c'', rotary subunit d, subunits e and f, and the accessory subunits ATP6AP1/Ac45 and ATP6AP2/PRR. Interacts with SNX10.

The protein localises to the membrane. The protein resides in the cytoplasmic vesicle. It is found in the clathrin-coated vesicle membrane. It localises to the cytoplasm. Its subcellular location is the cytoskeleton. The protein localises to the microtubule organizing center. The protein resides in the centrosome. It is found in the cell projection. It localises to the cilium. Its function is as follows. Subunit of the V1 complex of vacuolar(H+)-ATPase (V-ATPase), a multisubunit enzyme composed of a peripheral complex (V1) that hydrolyzes ATP and a membrane integral complex (V0) that translocates protons. V-ATPase is responsible for acidifying and maintaining the pH of intracellular compartments and in some cell types, is targeted to the plasma membrane, where it is responsible for acidifying the extracellular environment. May play a role in cilium biogenesis through regulation of the transport and the localization of proteins to the cilium. The polypeptide is V-type proton ATPase subunit D (Atp6v1d) (Mus musculus (Mouse)).